A 257-amino-acid chain; its full sequence is Large ribosomal subunit protein uL2 (257 aa).

Positions 207 to 231 (VEHPFGGGNHQHIGKPSTIRRDAPA) are disordered.

Belongs to the universal ribosomal protein uL2 family. As to quaternary structure, component of the large ribosomal subunit.

It localises to the cytoplasm. Its function is as follows. Component of the large ribosomal subunit. The ribosome is a large ribonucleoprotein complex responsible for the synthesis of proteins in the cell. This Xenopus tropicalis (Western clawed frog) protein is Large ribosomal subunit protein uL2 (rpl8).